The primary structure comprises 87 residues: Probable Fe(2+)-trafficking protein (87 aa).

It belongs to the Fe(2+)-trafficking protein family. As to quaternary structure, monomer.

Functionally, could be a mediator in iron transactions between iron acquisition and iron-requiring processes, such as synthesis and/or repair of Fe-S clusters in biosynthetic enzymes. The polypeptide is Probable Fe(2+)-trafficking protein (Buchnera aphidicola subsp. Baizongia pistaciae (strain Bp)).